A 177-amino-acid chain; its full sequence is ATP synthase subunit delta (177 aa).

Belongs to the ATPase delta chain family. In terms of assembly, F-type ATPases have 2 components, F(1) - the catalytic core - and F(0) - the membrane proton channel. F(1) has five subunits: alpha(3), beta(3), gamma(1), delta(1), epsilon(1). F(0) has three main subunits: a(1), b(2) and c(10-14). The alpha and beta chains form an alternating ring which encloses part of the gamma chain. F(1) is attached to F(0) by a central stalk formed by the gamma and epsilon chains, while a peripheral stalk is formed by the delta and b chains.

The protein localises to the cell inner membrane. F(1)F(0) ATP synthase produces ATP from ADP in the presence of a proton or sodium gradient. F-type ATPases consist of two structural domains, F(1) containing the extramembraneous catalytic core and F(0) containing the membrane proton channel, linked together by a central stalk and a peripheral stalk. During catalysis, ATP synthesis in the catalytic domain of F(1) is coupled via a rotary mechanism of the central stalk subunits to proton translocation. In terms of biological role, this protein is part of the stalk that links CF(0) to CF(1). It either transmits conformational changes from CF(0) to CF(1) or is implicated in proton conduction. This Shigella dysenteriae serotype 1 (strain Sd197) protein is ATP synthase subunit delta.